The primary structure comprises 496 residues: Genome polyprotein (496 aa).

The Extracellular segment spans residues 1–447 (SRCTHLENRD…HTVLGGAFNS (447 aa)). 6 cysteine pairs are disulfide-bonded: Cys-3–Cys-30, Cys-60–Cys-116, Cys-60–Cys-121, Cys-74–Cys-105, Cys-92–Cys-116, and Cys-92–Cys-121. A fusion peptide region spans residues 98 to 111 (DRGWGNHCGLFGKG). Asn-154 carries N-linked (GlcNAc...) asparagine; by host glycosylation. Cystine bridges form between Cys-186–Cys-290 and Cys-307–Cys-338. Residues 448–468 (IFGGVGFLPKLLMGVALAWLG) form a helical membrane-spanning segment. Over 469 to 479 (LNTRNPTMSMS) the chain is Cytoplasmic. Residues 480 to 496 (FLLAGGLVLAMTLGVGA) traverse the membrane as a helical segment.

As to quaternary structure, homodimer; in the endoplasmic reticulum and Golgi. N-glycosylated.

The protein localises to the virion membrane. It is found in the host endoplasmic reticulum membrane. Its function is as follows. Binds to host cell surface receptor and mediates fusion between viral and cellular membranes. Envelope protein is synthesized in the endoplasmic reticulum in the form of heterodimer with protein prM. They play a role in virion budding in the ER, and the newly formed immature particle is covered with 60 spikes composed of heterodimer between precursor prM and envelope protein E. The virion is transported to the Golgi apparatus where the low pH causes dissociation of PrM-E heterodimers and formation of E homodimers. prM-E cleavage is ineficient, and many virions are only partially matured. These uncleaved prM would play a role in immune evasion. The polypeptide is Genome polyprotein (Louping ill virus (strain Negishi 3248/49/P10) (Li)).